The chain runs to 379 residues: UDP-4-amino-4-deoxy-L-arabinose--oxoglutarate aminotransferase (379 aa).

K182 carries the N6-(pyridoxal phosphate)lysine modification.

It belongs to the DegT/DnrJ/EryC1 family. ArnB subfamily. As to quaternary structure, homodimer. The cofactor is pyridoxal 5'-phosphate.

The enzyme catalyses UDP-4-amino-4-deoxy-beta-L-arabinose + 2-oxoglutarate = UDP-beta-L-threo-pentopyranos-4-ulose + L-glutamate. Its pathway is nucleotide-sugar biosynthesis; UDP-4-deoxy-4-formamido-beta-L-arabinose biosynthesis; UDP-4-deoxy-4-formamido-beta-L-arabinose from UDP-alpha-D-glucuronate: step 2/3. It functions in the pathway bacterial outer membrane biogenesis; lipopolysaccharide biosynthesis. Its function is as follows. Catalyzes the conversion of UDP-4-keto-arabinose (UDP-Ara4O) to UDP-4-amino-4-deoxy-L-arabinose (UDP-L-Ara4N). The modified arabinose is attached to lipid A and is required for resistance to polymyxin and cationic antimicrobial peptides. This Escherichia coli (strain K12 / DH10B) protein is UDP-4-amino-4-deoxy-L-arabinose--oxoglutarate aminotransferase.